A 1390-amino-acid polypeptide reads, in one-letter code: Hepatocyte growth factor receptor (1390 aa).

Positions M1–G24 are cleaved as a signal peptide. At E25 to T932 the chain is on the extracellular side. One can recognise a Sema domain in the interval K27–L515. N-linked (GlcNAc...) asparagine glycosylation occurs at N45. 4 disulfide bridges follow: C95/C101, C98/C160, C133/C141, and C172/C175. N106 carries an N-linked (GlcNAc...) asparagine glycan. Residue N149 is glycosylated (N-linked (GlcNAc...) asparagine). Residue N202 is glycosylated (N-linked (GlcNAc...) asparagine). 2 disulfide bridges follow: C298–C363 and C385–C397. N399 and N405 each carry an N-linked (GlcNAc...) asparagine glycan. 4 disulfides stabilise this stretch: C520/C538, C526/C561, C529/C545, and C541/C551. IPT/TIG domains follow at residues P563–V655, P657–R739, and P742–V836. A glycan (O-linked (Man) threonine) is linked at T582. N-linked (GlcNAc...) asparagine glycosylation is found at N607 and N635. O-linked (Man) threonine glycosylation is found at T676 and T761. 3 N-linked (GlcNAc...) asparagine glycosylation sites follow: N785, N879, and N930. The chain crosses the membrane as a helical span at residues G933–L955. Topologically, residues K956–S1390 are cytoplasmic. A Phosphoserine modification is found at S966. Residue T977 is modified to Phosphothreonine. Phosphoserine occurs at positions 990, 997, and 1000. Y1003 is subject to Phosphotyrosine. Residues V1078–I1345 enclose the Protein kinase domain. ATP contacts are provided by residues I1084–V1092 and K1110. Residue D1204 is the Proton acceptor of the active site. The interaction with RANBP9 stretch occupies residues L1212 to S1390. Position 1230 is a phosphotyrosine (Y1230). 2 positions are modified to phosphotyrosine; by autocatalysis: Y1234 and Y1235. Residue T1289 is modified to Phosphothreonine. Residues W1320–V1359 form an interaction with MUC20 region. Phosphotyrosine; by autocatalysis is present on residues Y1349 and Y1356. Y1365 carries the post-translational modification Phosphotyrosine.

The protein belongs to the protein kinase superfamily. Tyr protein kinase family. As to quaternary structure, heterodimer made of an alpha chain (50 kDa) and a beta chain (145 kDa) which are disulfide linked. Binds PLXNB1. Interacts when phosphorylated with downstream effectors including STAT3, PIK3R1, SRC, PCLG1, GRB2 and GAB1. Interacts with SPSB1, SPSB2 and SPSB4. Interacts with INPP5D/SHIP1. When phosphorylated at Tyr-1356, interacts with INPPL1/SHIP2. Interacts with RANBP9 and RANBP10, as well as SPSB1, SPSB2, SPSB3 and SPSB4. SPSB1 binding occurs in the presence and in the absence of HGF, however HGF treatment has a positive effect on this interaction. Interacts with MUC20; prevents interaction with GRB2 and suppresses hepatocyte growth factor-induced cell proliferation. Interacts with GRB10. Interacts with PTPN1 and PTPN2. Interacts with HSP90AA1 and HSP90AB1; the interaction suppresses MET kinase activity. Interacts with tensin TNS3. Interacts (when phosphorylated) with tensin TNS4 (via SH2 domain); the interaction increases MET protein stability by inhibiting MET endocytosis and subsequent lysosomal degradation. In terms of processing, autophosphorylated in response to ligand binding on Tyr-1234 and Tyr-1235 in the kinase domain leading to further phosphorylation of Tyr-1349 and Tyr-1356 in the C-terminal multifunctional docking site. Dephosphorylated by PTPRJ at Tyr-1349 and Tyr-1365. Dephosphorylated by PTPN1 and PTPN2. Ubiquitinated. Ubiquitination by CBL regulates the receptor stability and activity through proteasomal degradation. Post-translationally, O-mannosylation of IPT/TIG domains by TMEM260 is required for protein maturation. O-mannosylated residues are composed of single mannose glycans that are not elongated or modified.

The protein localises to the membrane. It carries out the reaction L-tyrosyl-[protein] + ATP = O-phospho-L-tyrosyl-[protein] + ADP + H(+). Its activity is regulated as follows. In its inactive state, the C-terminal tail interacts with the catalytic domain and inhibits the kinase activity. Upon ligand binding, the C-terminal tail is displaced and becomes phosphorylated, thus increasing the kinase activity. Receptor tyrosine kinase that transduces signals from the extracellular matrix into the cytoplasm by binding to hepatocyte growth factor/HGF ligand. Regulates many physiological processes including proliferation, scattering, morphogenesis and survival. Ligand binding at the cell surface induces autophosphorylation of MET on its intracellular domain that provides docking sites for downstream signaling molecules. Following activation by ligand, interacts with the PI3-kinase subunit PIK3R1, PLCG1, SRC, GRB2, STAT3 or the adapter GAB1. Recruitment of these downstream effectors by MET leads to the activation of several signaling cascades including the RAS-ERK, PI3 kinase-AKT, or PLCgamma-PKC. The RAS-ERK activation is associated with the morphogenetic effects while PI3K/AKT coordinates prosurvival effects. During embryonic development, MET signaling plays a role in gastrulation, development and migration of muscles and neuronal precursors, angiogenesis and kidney formation. In adults, participates in wound healing as well as organ regeneration and tissue remodeling. Also promotes differentiation and proliferation of hematopoietic cells. The chain is Hepatocyte growth factor receptor (MET) from Pan troglodytes (Chimpanzee).